The primary structure comprises 229 residues: Enolase-phosphatase E1 (229 aa).

The protein belongs to the HAD-like hydrolase superfamily. MasA/MtnC family. Monomer. Mg(2+) serves as cofactor.

It carries out the reaction 5-methylsulfanyl-2,3-dioxopentyl phosphate + H2O = 1,2-dihydroxy-5-(methylsulfanyl)pent-1-en-3-one + phosphate. It participates in amino-acid biosynthesis; L-methionine biosynthesis via salvage pathway; L-methionine from S-methyl-5-thio-alpha-D-ribose 1-phosphate: step 3/6. Its pathway is amino-acid biosynthesis; L-methionine biosynthesis via salvage pathway; L-methionine from S-methyl-5-thio-alpha-D-ribose 1-phosphate: step 4/6. Bifunctional enzyme that catalyzes the enolization of 2,3-diketo-5-methylthiopentyl-1-phosphate (DK-MTP-1-P) into the intermediate 2-hydroxy-3-keto-5-methylthiopentenyl-1-phosphate (HK-MTPenyl-1-P), which is then dephosphorylated to form the acireductone 1,2-dihydroxy-3-keto-5-methylthiopentene (DHK-MTPene). This is Enolase-phosphatase E1 from Citrobacter koseri (strain ATCC BAA-895 / CDC 4225-83 / SGSC4696).